Here is a 114-residue protein sequence, read N- to C-terminus: Large ribosomal subunit protein uL18 (114 aa).

The protein belongs to the universal ribosomal protein uL18 family. As to quaternary structure, part of the 50S ribosomal subunit; part of the 5S rRNA/L5/L18/L25 subcomplex. Contacts the 5S and 23S rRNAs.

In terms of biological role, this is one of the proteins that bind and probably mediate the attachment of the 5S RNA into the large ribosomal subunit, where it forms part of the central protuberance. This Azobacteroides pseudotrichonymphae genomovar. CFP2 protein is Large ribosomal subunit protein uL18.